Reading from the N-terminus, the 282-residue chain is NADPH-dependent 7-cyano-7-deazaguanine reductase (282 aa).

88–90 (IES) is a substrate binding site. 90–91 (SK) lines the NADPH pocket. Catalysis depends on Cys-189, which acts as the Thioimide intermediate. The active-site Proton donor is Asp-196. Substrate is bound at residue 228-229 (HE). An NADPH-binding site is contributed by 257-258 (RG).

Belongs to the GTP cyclohydrolase I family. QueF type 2 subfamily. In terms of assembly, homodimer.

It is found in the cytoplasm. The catalysed reaction is 7-aminomethyl-7-carbaguanine + 2 NADP(+) = 7-cyano-7-deazaguanine + 2 NADPH + 3 H(+). The protein operates within tRNA modification; tRNA-queuosine biosynthesis. Its function is as follows. Catalyzes the NADPH-dependent reduction of 7-cyano-7-deazaguanine (preQ0) to 7-aminomethyl-7-deazaguanine (preQ1). The protein is NADPH-dependent 7-cyano-7-deazaguanine reductase of Photorhabdus laumondii subsp. laumondii (strain DSM 15139 / CIP 105565 / TT01) (Photorhabdus luminescens subsp. laumondii).